We begin with the raw amino-acid sequence, 212 residues long: UPF0502 protein ECA2523 (212 aa).

This sequence belongs to the UPF0502 family.

This chain is UPF0502 protein ECA2523, found in Pectobacterium atrosepticum (strain SCRI 1043 / ATCC BAA-672) (Erwinia carotovora subsp. atroseptica).